Reading from the N-terminus, the 185-residue chain is Ribosome-recycling factor (185 aa).

Belongs to the RRF family.

Its subcellular location is the cytoplasm. Functionally, responsible for the release of ribosomes from messenger RNA at the termination of protein biosynthesis. May increase the efficiency of translation by recycling ribosomes from one round of translation to another. This Mycobacterium avium (strain 104) protein is Ribosome-recycling factor.